A 533-amino-acid polypeptide reads, in one-letter code: Beta-apo-4'-carotenal oxygenase (533 aa).

Residues Glu-226 and Cys-260 contribute to the active site.

This sequence belongs to the aldehyde dehydrogenase family.

It catalyses the reaction 4'-apo-beta-carotenal + NAD(+) + H2O = neurosporaxanthin + NADH + 2 H(+). Its function is as follows. Beta-apo-4'-carotenal oxygenase involved in the last step of synthesis of neurosporaxanthin, a carboxylic apocarotenoid acting as an essential protective pigment and leading to orange pigmentation. Converts the aldehyde beta-apo-4'-carotenal into neurosporaxanthin. Neurosporaxanthin is synthesized from geranyl-geranyl pyrophosphate (GGPP) through several enzymatic activities. Phytoene synthase activity performed by the bifunctional enzyme al-2 first produces phytoene from geranyl-geranyl pyrophosphate (GGPP). The phytoene dehydrogenase al-1 then introduces 5 desaturations to lead to 3,4-didehydrolycopene via the intermediates phytofluene, zeta-carotene, neurosporene and lycopene. Al-2 cyclase activity then converts 3,4-didehydrolycopene into torulene. Al-2 can also convet lycopene into gamma-carotene which in turn is converted to beta-carotene by an additional al-2 cyclization reaction. Torulene is the substrate of the dioxidase cao-2 that breaks the molecule, removing five carbon atoms to yield beta-apo-4'-carotenal, whereas the aldehyde dehydrogenase ylo-1 mediates the last step by converting beta-apo-4'-carotenal into neurosporaxanthin. This is Beta-apo-4'-carotenal oxygenase from Neurospora crassa (strain ATCC 24698 / 74-OR23-1A / CBS 708.71 / DSM 1257 / FGSC 987).